Reading from the N-terminus, the 121-residue chain is Large ribosomal subunit protein bL19 (121 aa).

Belongs to the bacterial ribosomal protein bL19 family.

Its function is as follows. This protein is located at the 30S-50S ribosomal subunit interface and may play a role in the structure and function of the aminoacyl-tRNA binding site. The protein is Large ribosomal subunit protein bL19 of Porphyromonas gingivalis (strain ATCC BAA-308 / W83).